The chain runs to 265 residues: Ribosomal RNA small subunit methyltransferase A (265 aa).

S-adenosyl-L-methionine is bound by residues H13, L15, G40, E61, D85, and N103.

This sequence belongs to the class I-like SAM-binding methyltransferase superfamily. rRNA adenine N(6)-methyltransferase family. RsmA subfamily.

It is found in the cytoplasm. The catalysed reaction is adenosine(1518)/adenosine(1519) in 16S rRNA + 4 S-adenosyl-L-methionine = N(6)-dimethyladenosine(1518)/N(6)-dimethyladenosine(1519) in 16S rRNA + 4 S-adenosyl-L-homocysteine + 4 H(+). Specifically dimethylates two adjacent adenosines (A1518 and A1519) in the loop of a conserved hairpin near the 3'-end of 16S rRNA in the 30S particle. May play a critical role in biogenesis of 30S subunits. The protein is Ribosomal RNA small subunit methyltransferase A of Bordetella bronchiseptica (strain ATCC BAA-588 / NCTC 13252 / RB50) (Alcaligenes bronchisepticus).